Here is a 134-residue protein sequence, read N- to C-terminus: Agouti-related protein (134 aa).

Residues 1–20 (MLTTMLLSCALLLAMPTMLG) form the signal peptide. A propeptide spanning residues 21-84 (AQIGLAPLEG…VLDPEGRKAR (64 aa)) is cleaved from the precursor. 5 disulfide bridges follow: Cys89–Cys104, Cys96–Cys110, Cys103–Cys121, Cys107–Cys131, and Cys112–Cys119. In terms of domain architecture, Agouti spans 89 to 131 (CVRLHESCLGHQVPCCDPCATCYCRFFNAFCYCRKLGTATNPC). An interaction with melanocortin receptors region spans residues 113–115 (RFF).

Interacts with melanocortin receptors MC3R, MC4R and MC5R.

The protein localises to the secreted. The protein resides in the golgi apparatus lumen. In terms of biological role, plays a role in weight homeostasis. Involved in the control of feeding behavior through the central melanocortin system. Acts as alpha melanocyte-stimulating hormone antagonist by inhibiting cAMP production mediated by stimulation of melanocortin receptors within the hypothalamus and adrenal gland. Has very low activity with MC5R. Is an inverse agonist for MC3R and MC4R being able to suppress their constitutive activity. It promotes MC3R and MC4R endocytosis in an arrestin-dependent manner. The polypeptide is Agouti-related protein (AGRP) (Sus scrofa (Pig)).